We begin with the raw amino-acid sequence, 221 residues long: Secreted protein BARF1 (221 aa).

Residues 1-20 form the signal peptide; it reads MARFIAQLLLLASCVAAGQA. Ig-like domains lie at 21–120 and 124–220; these read VTAF…EHLS and PLTL…GYLS. N-linked (GlcNAc...) asparagine; by host glycosylation occurs at N95. A disulfide bridge links C146 with C201.

In terms of assembly, homohexamer. Interacts with human CSF1. Phosphorylated on serine and threonine by host.

The protein resides in the secreted. Its function is as follows. Plays diverse functions in immunomodulation and oncogenicity, maybe by acting as a functional receptor for human CSF1. May inhibit interferon secretion from mononuclear cells. Exhibits oncogenic activity in vitro. The sequence is that of Secreted protein BARF1 from Epstein-Barr virus (strain B95-8) (HHV-4).